A 490-amino-acid chain; its full sequence is Protoporphyrinogen oxidase (490 aa).

Residues 7 to 12 (GGGIAG), 32 to 33 (EK), tryptophan 40, 61 to 64 (GPRT), and 466 to 468 (VSI) contribute to the FAD site.

Belongs to the protoporphyrinogen/coproporphyrinogen oxidase family. Protoporphyrinogen oxidase subfamily. The cofactor is FAD.

It localises to the mitochondrion. The catalysed reaction is protoporphyrinogen IX + 3 O2 = protoporphyrin IX + 3 H2O2. It functions in the pathway porphyrin-containing compound metabolism; protoporphyrin-IX biosynthesis; protoporphyrin-IX from protoporphyrinogen-IX: step 1/1. In terms of biological role, catalyzes the 6-electron oxidation of protoporphyrinogen-IX to form protoporphyrin-IX. The protein is Protoporphyrinogen oxidase (hem14) of Schizosaccharomyces pombe (strain 972 / ATCC 24843) (Fission yeast).